A 76-amino-acid chain; its full sequence is Acyl carrier protein (76 aa).

The region spanning 1 to 76 (MSIEERVKKI…SAIDYVQNNQ (76 aa)) is the Carrier domain. Ser36 carries the post-translational modification O-(pantetheine 4'-phosphoryl)serine.

This sequence belongs to the acyl carrier protein (ACP) family. Post-translationally, 4'-phosphopantetheine is transferred from CoA to a specific serine of apo-ACP by AcpS. This modification is essential for activity because fatty acids are bound in thioester linkage to the sulfhydryl of the prosthetic group.

The protein resides in the cytoplasm. The protein operates within lipid metabolism; fatty acid biosynthesis. In terms of biological role, carrier of the growing fatty acid chain in fatty acid biosynthesis. The sequence is that of Acyl carrier protein from Histophilus somni (strain 129Pt) (Haemophilus somnus).